The primary structure comprises 537 residues: MNQTKYIFVTGGVTSSLGKGIIAASLAKLLQARGYRTTIQKFDPYINVDPGTLNPYEHGECYVTNDGAETDLDLGHYERFLNVPTSQANNVTTGRIYLSVIEKERRGEFLGKTVQVVPHITNEIKERMQLLGKSGDYDIVITEIGGTVGDIESLPYIESVRQLVWELGENNGIVIHLTLVPFLAAAGELKTKPTQHSVKTLMESGIKADILVCRTEYELSEDLRHKLALFCNVKREAVIQSIDASTIYDVPNLMLEEGLDKVALKKLDLPEKSTPDLKQWNEFLQKHKNPKHEVSIGLVGKYVELQDSYKSILEAFIHAGATNETKVNVISIHSEFLDVNSADEQLKGLDGILVAPGFGGRGIEGKIETVRYAREKNIPFLGICLGMQMAVIEYSRNVLGYTDANSTEMNQNTSHPVINLMEEQKTITDKGGTMRLGAWKCHLSENTLAHKIYGQSDILERHRHRYEFNSEYLEVLQKAGLKASGVNPETGLVEVIELENHPFFIGVQYHPEYKSTVLAPHPLFVSFIAAAVKHKNK.

The tract at residues 1 to 269 (MNQTKYIFVT…DKVALKKLDL (269 aa)) is amidoligase domain. A CTP-binding site is contributed by Ser-15. Ser-15 contacts UTP. Residue 16–21 (SLGKGI) participates in ATP binding. Tyr-56 is an L-glutamine binding site. Asp-73 lines the ATP pocket. Residues Asp-73 and Glu-143 each contribute to the Mg(2+) site. CTP-binding positions include 150 to 152 (DIE), 190 to 195 (KTKPTQ), and Lys-226. UTP-binding positions include 190–195 (KTKPTQ) and Lys-226. One can recognise a Glutamine amidotransferase type-1 domain in the interval 295–537 (SIGLVGKYVE…IAAAVKHKNK (243 aa)). An L-glutamine-binding site is contributed by Gly-357. Cys-384 (nucleophile; for glutamine hydrolysis) is an active-site residue. Residues 385–388 (LGMQ), Glu-408, and Arg-465 each bind L-glutamine. Catalysis depends on residues His-510 and Glu-512.

Belongs to the CTP synthase family. Homotetramer.

The enzyme catalyses UTP + L-glutamine + ATP + H2O = CTP + L-glutamate + ADP + phosphate + 2 H(+). It carries out the reaction L-glutamine + H2O = L-glutamate + NH4(+). It catalyses the reaction UTP + NH4(+) + ATP = CTP + ADP + phosphate + 2 H(+). It participates in pyrimidine metabolism; CTP biosynthesis via de novo pathway; CTP from UDP: step 2/2. Allosterically activated by GTP, when glutamine is the substrate; GTP has no effect on the reaction when ammonia is the substrate. The allosteric effector GTP functions by stabilizing the protein conformation that binds the tetrahedral intermediate(s) formed during glutamine hydrolysis. Inhibited by the product CTP, via allosteric rather than competitive inhibition. Catalyzes the ATP-dependent amination of UTP to CTP with either L-glutamine or ammonia as the source of nitrogen. Regulates intracellular CTP levels through interactions with the four ribonucleotide triphosphates. In Flavobacterium psychrophilum (strain ATCC 49511 / DSM 21280 / CIP 103535 / JIP02/86), this protein is CTP synthase.